The following is a 168-amino-acid chain: Diphosphoinositol polyphosphate phosphohydrolase 1 (168 aa).

The residue at position 1 (methionine 1) is an N-acetylmethionine. Substrate contacts are provided by residues arginine 10, 18-20, and 39-41; these read KKR and SSR. In terms of domain architecture, Nudix hydrolase spans 17–142; sequence YKKRAACLCF…KPVQASYFEA (126 aa). Mg(2+) contacts are provided by glycine 50 and glutamate 66. A Nudix box motif is present at residues 51 to 72; the sequence is GGMEPEEEPSVAAVREVCEEAG. The active-site Proton acceptor is the glutamate 69. Position 70 (glutamate 70) interacts with Mg(2+). Substrate-binding positions include 89 to 91, arginine 115, and lysine 133; that span reads RKH.

Belongs to the Nudix hydrolase family. DIPP subfamily. Monomer. Mg(2+) serves as cofactor. It depends on Mn(2+) as a cofactor. The cofactor is Zn(2+).

It is found in the cytoplasm. The protein localises to the nucleus. It catalyses the reaction diphospho-myo-inositol polyphosphate + H2O = myo-inositol polyphosphate + phosphate.. It carries out the reaction 5-diphospho-1D-myo-inositol 1,2,3,4,6-pentakisphosphate + H2O = 1D-myo-inositol hexakisphosphate + phosphate + H(+). The catalysed reaction is 3,5-bis(diphospho)-1D-myo-inositol 1,2,4,6-tetrakisphosphate + H2O = 3-diphospho-1D-myo-inositol 1,2,4,5,6-pentakisphosphate + phosphate + 2 H(+). The enzyme catalyses [phosphate](n+1) + n H2O = (n+1) phosphate + n H(+). It catalyses the reaction P(1),P(5)-bis(5'-adenosyl) pentaphosphate + H2O = ADP + ATP + 2 H(+). It carries out the reaction P(1),P(6)-bis(5'-adenosyl) hexaphosphate + H2O = 2 ATP + 2 H(+). The catalysed reaction is P(1),P(4)-bis(5'-adenosyl) tetraphosphate + H2O = AMP + ATP + 2 H(+). The enzyme catalyses a 5'-end (N(7)-methyl 5'-triphosphoguanosine)-ribonucleoside in mRNA + H2O = N(7)-methyl-GMP + a 5'-end diphospho-ribonucleoside in mRNA + 2 H(+). It catalyses the reaction a 5'-end (N(7)-methyl 5'-triphosphoguanosine)-ribonucleoside in mRNA + H2O = N(7)-methyl-GDP + a 5'-end phospho-ribonucleoside in mRNA + 2 H(+). With respect to regulation, diphosphoinositol polyphosphate phosphohydrolase is inhibited by fluoride and InsP6. Functionally, cleaves a beta-phosphate from the diphosphate groups in PP-InsP5 (diphosphoinositol pentakisphosphate) and [PP]2-InsP4 (bisdiphosphoinositol tetrakisphosphate), suggesting that it may play a role in signal transduction. InsP6 (inositol hexakisphosphate) is not a substrate. Acts as a negative regulator of the ERK1/2 pathway. Also able to catalyze the hydrolysis of dinucleoside oligophosphates, with diadenosine 5',5'''-P1,P6-hexaphosphate (Ap6A) and diadenosine 5',5'''- P1,P5-pentaphosphate (Ap5A) being the preferred substrates. The major reaction products are ADP and p4a from Ap6A and ADP and ATP from Ap5A. Also able to hydrolyze 5- phosphoribose 1-diphosphate. Acts as a decapping enzyme that can hydrolyze both monomethylated and unmethylated capped RNAs. Hydrolyzes monomethylated capped RNA after both the alpha- and beta-phosphates generating m7GMP + ppRNA and m7GDP + pRNA. Modulates the stability of a subset of mRNAs implicated in cell motility. Divalent cations zinc, magnesium and manganese determine its substrate specificity. Exhibits endopolyphosphatase activity in the presence of zinc ions. Exhibits diphosphoinositol polyphosphate phosphohydrolase in the presence of magnesium ions and diadenosine hexaphosphate hydrolase activity in the presence of manganese ions. Plays an important role in limiting DNA damage and maintaining cell survival upon oxidative stress via its endopolyphosphatase activity. This chain is Diphosphoinositol polyphosphate phosphohydrolase 1, found in Rattus norvegicus (Rat).